The following is a 371-amino-acid chain: Methylthioribose-1-phosphate isomerase (371 aa).

Substrate-binding positions include 53 to 55, Arg-90, and Gln-203; that span reads RGA. The active-site Proton donor is the Asp-243. 253–254 serves as a coordination point for substrate; sequence NK.

Belongs to the eIF-2B alpha/beta/delta subunits family. MtnA subfamily.

The enzyme catalyses 5-(methylsulfanyl)-alpha-D-ribose 1-phosphate = 5-(methylsulfanyl)-D-ribulose 1-phosphate. It carries out the reaction 5-deoxy-alpha-D-ribose 1-phosphate = 5-deoxy-D-ribulose 1-phosphate. It participates in amino-acid biosynthesis; L-methionine biosynthesis via salvage pathway; L-methionine from S-methyl-5-thio-alpha-D-ribose 1-phosphate: step 1/6. Functionally, catalyzes the interconversion of methylthioribose-1-phosphate (MTR-1-P) into methylthioribulose-1-phosphate (MTRu-1-P). Also catalyzes the interconversion of 5-deoxyribose 1-phosphate and 5-deoxyribulose 1-phosphate. Part of a bifunctional DHAP-shunt salvage pathway for SAM by-products. The protein is Methylthioribose-1-phosphate isomerase of Escherichia coli O45:K1 (strain S88 / ExPEC).